Here is a 425-residue protein sequence, read N- to C-terminus: MADIIHVMAREILDSRGNPTVEAEVFLDDGARGVAGVPSGASTGVHEAHELRDGGDRYLGKGVLKAVENVNEEIADELAGFEADDQRLIDQALIKLDGTENKSRLGANAILGVSIAAAKAAAESAGLPLYRYVGGPNAHVLPVPMMNIVNGGAHADSGVDVQEFMIAPIGAESFSEALRIGAEVYHALKSVIKSKGLSTGLGDEGGFAPEAESTKAALDLIIEAIKKAGFEPGKDVALALDVASSEFFKDGKYHFEGGEHTAEEMAKVYEELVAKYPIVSIEDPLQEDDWEGYTKLTETLGDKVQIVGDDFFVTNPARLQEGIDKKAANALLVKVNQIGTLTETFDAVELAHRNGYRTMMSHRSGETEDTTIADLAVALNCGQIKTGAPARSERVAKYNQLLRIEQELGDAAVYAGRSAFPRFQG.

Gln-162 provides a ligand contact to (2R)-2-phosphoglycerate. The active-site Proton donor is the Glu-204. Positions 241, 282, and 309 each coordinate Mg(2+). Lys-334, Arg-363, Ser-364, and Lys-385 together coordinate (2R)-2-phosphoglycerate. Lys-334 (proton acceptor) is an active-site residue.

It belongs to the enolase family. The cofactor is Mg(2+).

The protein resides in the cytoplasm. It localises to the secreted. It is found in the cell surface. It carries out the reaction (2R)-2-phosphoglycerate = phosphoenolpyruvate + H2O. The protein operates within carbohydrate degradation; glycolysis; pyruvate from D-glyceraldehyde 3-phosphate: step 4/5. Functionally, catalyzes the reversible conversion of 2-phosphoglycerate (2-PG) into phosphoenolpyruvate (PEP). It is essential for the degradation of carbohydrates via glycolysis. This Corynebacterium aurimucosum (strain ATCC 700975 / DSM 44827 / CIP 107346 / CN-1) (Corynebacterium nigricans) protein is Enolase.